A 491-amino-acid polypeptide reads, in one-letter code: Probable CtpA-like serine protease (491 aa).

The tract at residues 1–22 is disordered; sequence MNDHQKNHATSQDDNTKSTPSK. The segment covering 8–22 has biased composition (polar residues); that stretch reads HATSQDDNTKSTPSK. The chain crosses the membrane as a helical span at residues 31 to 51; sequence LWHFILVILGIILLTSIITVV. The PDZ domain maps to 119 to 201; sequence TKQFNEGVSG…TYVTLTIKRG (83 aa). Active-site charge relay system residues include Ser324, Asp335, and Lys349.

The protein belongs to the peptidase S41A family.

It localises to the cell membrane. In Staphylococcus epidermidis (strain ATCC 12228 / FDA PCI 1200), this protein is Probable CtpA-like serine protease.